The chain runs to 62 residues: Conotoxin Cal12.2e (62 aa).

The N-terminal stretch at 1–19 (MKLTCVLVVLLLVLPFGDL) is a signal peptide.

This sequence belongs to the conotoxin O1 superfamily. Post-translationally, contains 4 disulfide bonds. Expressed by the venom duct.

The protein localises to the secreted. Probable neurotoxin. This Californiconus californicus (California cone) protein is Conotoxin Cal12.2e.